We begin with the raw amino-acid sequence, 156 residues long: ATP synthase subunit b (156 aa).

A helical transmembrane segment spans residues 3–23 (ITLTIFAQALAFAGLIWIVAT).

Belongs to the ATPase B chain family. F-type ATPases have 2 components, F(1) - the catalytic core - and F(0) - the membrane proton channel. F(1) has five subunits: alpha(3), beta(3), gamma(1), delta(1), epsilon(1). F(0) has three main subunits: a(1), b(2) and c(10-14). The alpha and beta chains form an alternating ring which encloses part of the gamma chain. F(1) is attached to F(0) by a central stalk formed by the gamma and epsilon chains, while a peripheral stalk is formed by the delta and b chains.

The protein resides in the cell inner membrane. F(1)F(0) ATP synthase produces ATP from ADP in the presence of a proton or sodium gradient. F-type ATPases consist of two structural domains, F(1) containing the extramembraneous catalytic core and F(0) containing the membrane proton channel, linked together by a central stalk and a peripheral stalk. During catalysis, ATP synthesis in the catalytic domain of F(1) is coupled via a rotary mechanism of the central stalk subunits to proton translocation. In terms of biological role, component of the F(0) channel, it forms part of the peripheral stalk, linking F(1) to F(0). In Xanthomonas axonopodis pv. citri (strain 306), this protein is ATP synthase subunit b.